A 147-amino-acid polypeptide reads, in one-letter code: MSTEDFYLRYYVGHKGKFGHEFLEFEFRPDGKLRYANNSNYKNDTMIRKEAFVHQSVMEELKRIIIDSEIMQEDDLPWPPPDRVGRQELEIVIGDEHISFTTSKTGSLVDVNRSKDPEGLRCFYYLVQDLKCLVFSLIGLHFKIKPI.

It belongs to the mago nashi family. Heterodimer with tsu/RBM8A. Part of the mRNA splicing-dependent exon junction complex (EJC) complex; the core complex contains btz/CASC3, eIF4AIII, mago and tsu/RBM8A. Interacts with Pym (via N-terminus); the interaction is direct. Interacts with eIF4AIII.

The protein resides in the nucleus. It localises to the cytoplasm. In terms of biological role, core component of the splicing-dependent multiprotein exon junction complex (EJC) deposited at splice junctions on mRNAs. Involved in exon definition of genes containing long introns, including the rolled/MAPK gene. The mago-tsu heterodimer interacts with the EJC key regulator Pym leading to EJC disassembly in the cytoplasm. Has a role in oskar mRNA localization to the posterior pole of the developing oocyte, and may also be involved in polarization of the oocyte microtubule cytoskeleton. This Drosophila melanogaster (Fruit fly) protein is Protein mago nashi.